Consider the following 191-residue polypeptide: Probable nicotinate-nucleotide adenylyltransferase (191 aa).

This sequence belongs to the NadD family.

It carries out the reaction nicotinate beta-D-ribonucleotide + ATP + H(+) = deamido-NAD(+) + diphosphate. It functions in the pathway cofactor biosynthesis; NAD(+) biosynthesis; deamido-NAD(+) from nicotinate D-ribonucleotide: step 1/1. Its function is as follows. Catalyzes the reversible adenylation of nicotinate mononucleotide (NaMN) to nicotinic acid adenine dinucleotide (NaAD). This chain is Probable nicotinate-nucleotide adenylyltransferase, found in Oceanobacillus iheyensis (strain DSM 14371 / CIP 107618 / JCM 11309 / KCTC 3954 / HTE831).